Reading from the N-terminus, the 457-residue chain is Transcription factor PCF7 (457 aa).

The stretch at Ser58–Gln84 forms a coiled coil. The disordered stretch occupies residues Arg95–Val121. Gly residues predominate over residues Gly101–Ser115. In terms of domain architecture, TCP spans Arg140–Leu198. 2 disordered regions span residues Pro199 to Asn231 and Lys263 to Gln299. A compositionally biased stretch (polar residues) spans Ser212–Gly230. Positions Ser268 to Ala278 are enriched in low complexity.

In terms of assembly, forms homodimers and heterodimers.

The protein localises to the nucleus. In terms of biological role, transcription activator. Binds the promoter core sequence 5'-GGNCC-3'. This chain is Transcription factor PCF7 (PCF7), found in Oryza sativa subsp. indica (Rice).